The primary structure comprises 369 residues: Erythronate-4-phosphate dehydrogenase (369 aa).

The substrate site is built by Ser-45 and Thr-66. Asp-146 lines the NAD(+) pocket. Residue Arg-209 is part of the active site. Residue Asp-233 participates in NAD(+) binding. Glu-238 is a catalytic residue. His-255 acts as the Proton donor in catalysis. Gly-258 contributes to the NAD(+) binding site.

The protein belongs to the D-isomer specific 2-hydroxyacid dehydrogenase family. PdxB subfamily. In terms of assembly, homodimer.

It is found in the cytoplasm. The catalysed reaction is 4-phospho-D-erythronate + NAD(+) = (R)-3-hydroxy-2-oxo-4-phosphooxybutanoate + NADH + H(+). Its pathway is cofactor biosynthesis; pyridoxine 5'-phosphate biosynthesis; pyridoxine 5'-phosphate from D-erythrose 4-phosphate: step 2/5. Catalyzes the oxidation of erythronate-4-phosphate to 3-hydroxy-2-oxo-4-phosphonooxybutanoate. The protein is Erythronate-4-phosphate dehydrogenase of Porphyromonas gingivalis (strain ATCC BAA-308 / W83).